The following is a 123-amino-acid chain: U11/U12 small nuclear ribonucleoprotein 25 kDa protein (123 aa).

One can recognise a Ubiquitin-like domain in the interval 32–123 (MTVRVCKMDG…VSFIKKLRQK (92 aa)).

Component of the U11/U12 snRNPs that are part of the U12-type spliceosome.

It localises to the nucleus. This chain is U11/U12 small nuclear ribonucleoprotein 25 kDa protein (Snrnp25), found in Mus musculus (Mouse).